The chain runs to 1124 residues: Sodium/hydrogen exchanger 11 (1124 aa).

11 consecutive transmembrane segments (helical) span residues Leu25–Leu45, Cys52–Tyr72, Phe90–Phe110, Val120–Ile140, Ile179–Phe199, Asp224–Ala244, Ile254–Ser274, Ile305–Gly325, Ile335–Leu355, Gly372–Val392, and Met405–Met425. N-linked (GlcNAc...) asparagine glycosylation is found at Asn447 and Asn473. Helical transmembrane passes span Thr612–Ala632, Ile641–Ile661, Leu674–Leu694, and Val706–Ile726. An ion transport-like region spans residues Ser642–Ile723. Residue Ile867–Leu999 coordinates a nucleoside 3',5'-cyclic phosphate.

The protein belongs to the monovalent cation:proton antiporter 1 (CPA1) transporter (TC 2.A.36) family.

It localises to the membrane. Functionally, involved in pH regulation. The chain is Sodium/hydrogen exchanger 11 (SLC9C2) from Homo sapiens (Human).